The following is a 152-amino-acid chain: Deoxyuridine 5'-triphosphate nucleotidohydrolase (152 aa).

Residues 71-73 (RSG), N84, 88-90 (LID), and K98 contribute to the substrate site.

The protein belongs to the dUTPase family. It depends on Mg(2+) as a cofactor.

It catalyses the reaction dUTP + H2O = dUMP + diphosphate + H(+). The protein operates within pyrimidine metabolism; dUMP biosynthesis; dUMP from dCTP (dUTP route): step 2/2. Its function is as follows. This enzyme is involved in nucleotide metabolism: it produces dUMP, the immediate precursor of thymidine nucleotides and it decreases the intracellular concentration of dUTP so that uracil cannot be incorporated into DNA. The protein is Deoxyuridine 5'-triphosphate nucleotidohydrolase of Legionella pneumophila (strain Paris).